A 415-amino-acid polypeptide reads, in one-letter code: Diaminopimelate decarboxylase (415 aa).

Lys54 carries the N6-(pyridoxal phosphate)lysine modification. Residues Gly223 and Glu264 to Arg267 each bind pyridoxal 5'-phosphate. Substrate is bound by residues Arg267, Arg303, and Tyr307. The Proton donor role is filled by Cys338. Residues Glu339 and Tyr374 each contribute to the substrate site. Tyr374 lines the pyridoxal 5'-phosphate pocket.

Belongs to the Orn/Lys/Arg decarboxylase class-II family. LysA subfamily. In terms of assembly, homodimer. Pyridoxal 5'-phosphate is required as a cofactor.

The catalysed reaction is meso-2,6-diaminopimelate + H(+) = L-lysine + CO2. It functions in the pathway amino-acid biosynthesis; L-lysine biosynthesis via DAP pathway; L-lysine from DL-2,6-diaminopimelate: step 1/1. Functionally, specifically catalyzes the decarboxylation of meso-diaminopimelate (meso-DAP) to L-lysine. The protein is Diaminopimelate decarboxylase of Buchnera aphidicola subsp. Schizaphis graminum (strain Sg).